We begin with the raw amino-acid sequence, 207 residues long: Large ribosomal subunit protein uL4 (207 aa).

Residues 43–80 are disordered; that stretch reads RRRSGTAKSKGRSEVSGSTRKLYRQKGTGNARSGSVKS. Positions 69-78 are enriched in polar residues; sequence GTGNARSGSV.

It belongs to the universal ribosomal protein uL4 family. In terms of assembly, part of the 50S ribosomal subunit.

Functionally, one of the primary rRNA binding proteins, this protein initially binds near the 5'-end of the 23S rRNA. It is important during the early stages of 50S assembly. It makes multiple contacts with different domains of the 23S rRNA in the assembled 50S subunit and ribosome. In terms of biological role, forms part of the polypeptide exit tunnel. The polypeptide is Large ribosomal subunit protein uL4 (Desulforapulum autotrophicum (strain ATCC 43914 / DSM 3382 / VKM B-1955 / HRM2) (Desulfobacterium autotrophicum)).